We begin with the raw amino-acid sequence, 260 residues long: Ribonuclease HII (260 aa).

The region spanning 71 to 259 is the RNase H type-2 domain; sequence ELVAGVDEVG…VHDAIVNKKN (189 aa). A divalent metal cation is bound by residues D77, E78, and D169.

It belongs to the RNase HII family. Requires Mn(2+) as cofactor. It depends on Mg(2+) as a cofactor.

It is found in the cytoplasm. The catalysed reaction is Endonucleolytic cleavage to 5'-phosphomonoester.. Endonuclease that specifically degrades the RNA of RNA-DNA hybrids. The sequence is that of Ribonuclease HII from Leuconostoc citreum (strain KM20).